We begin with the raw amino-acid sequence, 362 residues long: UPF0283 membrane protein Arad_2632 (362 aa).

Residues Met1–Gly11 show a composition bias toward basic and acidic residues. The segment at Met1 to Asp47 is disordered. A run of 2 helical transmembrane segments spans residues Phe82–Leu102 and Leu118–Val138.

This sequence belongs to the UPF0283 family.

The protein localises to the cell inner membrane. The polypeptide is UPF0283 membrane protein Arad_2632 (Rhizobium rhizogenes (strain K84 / ATCC BAA-868) (Agrobacterium radiobacter)).